The chain runs to 208 residues: Thymidylate kinase (208 aa).

10–17 (GPDGSGKT) lines the ATP pocket.

Belongs to the thymidylate kinase family.

It catalyses the reaction dTMP + ATP = dTDP + ADP. Its function is as follows. Phosphorylation of dTMP to form dTDP in both de novo and salvage pathways of dTTP synthesis. This chain is Thymidylate kinase, found in Listeria welshimeri serovar 6b (strain ATCC 35897 / DSM 20650 / CCUG 15529 / CIP 8149 / NCTC 11857 / SLCC 5334 / V8).